Consider the following 68-residue polypeptide: Bacteriocin lactococcin-B (68 aa).

Positions 1-21 are excised as a propeptide; it reads MKNQLNFNIVSDEELAEVNGG.

The protein localises to the secreted. Its function is as follows. Kills Lactococci by dissipating the membrane potential of the cells. This is Bacteriocin lactococcin-B (lcnB) from Lactococcus lactis subsp. cremoris (Streptococcus cremoris).